Here is a 249-residue protein sequence, read N- to C-terminus: Sodium channel modifier 1 (249 aa).

The Bipartite nuclear localization signal motif lies at 4 to 20; the sequence is KREGDDQSQLNILKKRR. A Matrin-type zinc finger spans residues 42-74; the sequence is YSCLVCSHRPVFDTVDMLVVHRKGKRHLEGMKW. The span at 94–103 shows a compositional bias: basic and acidic residues; the sequence is YVKAEDDRQE. Disordered stretches follow at residues 94–116, 128–199, and 228–249; these read YVKAEDDRQEPSSSAPLLTQTRK, YSSC…PLTE, and ENVEFDSDEEEPTLLPPCSESS. Residues 104 to 115 are compositionally biased toward polar residues; it reads PSSSAPLLTQTR. The segment covering 134-149 has biased composition (basic and acidic residues); it reads KASERSESSSKEHRND. A compositionally biased stretch (polar residues) spans 150–170; that stretch reads LANSHLSMRTESNDSRTTVHQ. Acidic residues predominate over residues 230 to 239; it reads VEFDSDEEEP.

In terms of assembly, component of the minor spliceosome, which splices U12-type introns.

The protein resides in the nucleus. Its subcellular location is the nucleoplasm. The protein localises to the nucleus speckle. Its function is as follows. As a component of the minor spliceosome, involved in the splicing of U12-type introns in pre-mRNAs. This is Sodium channel modifier 1 (scnm1) from Danio rerio (Zebrafish).